Here is a 66-residue protein sequence, read N- to C-terminus: UPF0370 protein YpfN (66 aa).

Residues 4–24 form a helical membrane-spanning segment; the sequence is LAKYWWILVLVFLVGVLLNVI. Residues 39 to 66 are disordered; that stretch reads KPELPPHRDFNDKWDDEDDWPKKDQPKK. Over residues 42–51 the composition is skewed to basic and acidic residues; the sequence is LPPHRDFNDK.

Belongs to the UPF0370 family.

The protein localises to the cell membrane. The chain is UPF0370 protein YpfN from Salmonella paratyphi C (strain RKS4594).